Consider the following 77-residue polypeptide: Conotoxin ArMKLT2-0251 (77 aa).

The first 22 residues, 1 to 22 (MKLTCVLIVAVLILTACQLIAA), serve as a signal peptide directing secretion. A propeptide spanning residues 23 to 46 (DDSRDLKRFSRRKMRDGMLNTKNM) is cleaved from the precursor. Glutamine 49 is subject to Pyrrolidone carboxylic acid. 3 cysteine pairs are disulfide-bonded: cysteine 50–cysteine 65, cysteine 57–cysteine 68, and cysteine 64–cysteine 73.

It belongs to the conotoxin O1 superfamily. As to expression, expressed by the venom duct.

The protein localises to the secreted. The chain is Conotoxin ArMKLT2-0251 from Conus arenatus (Sand-dusted cone).